A 602-amino-acid chain; its full sequence is Spermidine-citrate ligase (602 aa).

ATP is bound by residues 286–288 (SLR), Lys-300, and Arg-312.

It belongs to the IucA/IucC family.

It catalyses the reaction spermidine + citrate + ATP = N(8)-citryl-spermidine + AMP + diphosphate + H(+). It functions in the pathway siderophore biosynthesis; petrobactin biosynthesis. In terms of biological role, involved in the biosynthesis of petrobactin, a catecholate siderophore that functions in both iron acquisition and virulence. Catalyzes the ATP-dependent condensation of citric acid and spermidine to form N(8)-citryl-spermidine. It can also catalyze the condensation of several di- and triamine analogs of spermidine with citric acid and the condensation of the citric acid analog tricarballylic acid with spermidine. Required for growth in iron-depleted medium and for full virulence in a mouse model of infection. In Bacillus anthracis, this protein is Spermidine-citrate ligase.